The following is a 95-amino-acid chain: Ubiquinol-cytochrome-c reductase complex assembly factor 3 (95 aa).

The Mitochondrial matrix portion of the chain corresponds to 1–7; that stretch reads MTTLRKL. A helical membrane pass occupies residues 8–28; the sequence is LLVGALLGAGAGVGTALFALV. The tract at residues 23–80 is mediates lipid-binding; that stretch reads ALFALVTPGEERKQAMLKEMPEQYPQRRDEAARTKELLLATLQEAAATQENVAWRKNW. The Mitochondrial intermembrane segment spans residues 29 to 95; it reads TPGEERKQAM…GGGGGGGRSA (67 aa).

Belongs to the UQCC3 family. Associates with the ubiquinol-cytochrome c reductase complex (mitochondrial respiratory chain complex III(CIII) or cytochrome b-c1 complex). Interacts with UQCC1. Forms a complex, named COMC, composed of UQCC1, UQCC2; UQCC3 and UQCC4; mediates MT-CYB hemylation and association with the first nuclear-encoded complex III subunit UQCRQ. Post-translationally, probably cleaved by OMA1 under mitochondrial stress conditions.

It localises to the mitochondrion inner membrane. Required for the assembly of the ubiquinol-cytochrome c reductase complex (mitochondrial respiratory chain complex III or cytochrome b-c1 complex), mediating cytochrome b recruitment and probably stabilization within the complex. Thereby, plays an important role in ATP production by mitochondria. Cardiolipin-binding protein, it may also control the cardiolipin composition of mitochondria membranes and their morphology. The polypeptide is Ubiquinol-cytochrome-c reductase complex assembly factor 3 (Bos taurus (Bovine)).